Here is a 280-residue protein sequence, read N- to C-terminus: Tumor necrosis factor ligand superfamily member 6 (280 aa).

Residues 1–80 lie on the Cytoplasmic side of the membrane; that stretch reads MQQPFNYPYP…KKRGNHSTGL (80 aa). A disordered region spans residues 20–70; sequence SSPWAPPGTVLPCPTSVPRRPGQRRPPPPPPPPPLPPPPPSPLPPLPLPPL. Over residues 43–69 the composition is skewed to pro residues; that stretch reads RRPPPPPPPPPLPPPPPSPLPPLPLPP. The helical; Signal-anchor for type II membrane protein transmembrane segment at 81 to 101 threads the bilayer; the sequence is CLLVMFFMVLVALVGLGLGMF. Over 102 to 280 the chain is Extracellular; the sequence is QLFHLQKELA…SQTFFGLYKL (179 aa). The segment at 117–155 is disordered; that stretch reads TSQKHTASSLEKQIGHPSPPPEKKEQRKVAHLTGKPNSR. The THD domain occupies 144 to 280; it reads KVAHLTGKPN…SQTFFGLYKL (137 aa). Asparagine 183 carries an N-linked (GlcNAc...) asparagine glycan. A disulfide bridge connects residues cysteine 201 and cysteine 232. 2 N-linked (GlcNAc...) asparagine glycosylation sites follow: asparagine 249 and asparagine 259.

Belongs to the tumor necrosis factor family. In terms of assembly, homotrimer. Interacts with ARHGAP9, BAIAP2L1, BTK, CACNB3, CACNB4, CRK, DLG2, DNMBP, DOCK4, EPS8L3, FGR, FYB1, FYN, HCK, ITK, ITSN2, KALRN, LYN, MACC1, MIA, MPP4, MYO15A, NCF1, NCK1, NCK2, NCKIPSD, OSTF1, PIK3R1, PSTPIP1, RIMBP3C, SAMSN1, SH3GL3, SH3PXD2B, SH3PXD2A, SH3RF2, SKAP2, SNX33, SNX9, SORBS3, SPTA1, SRC, SRGAP1, SRGAP2, SRGAP3, TEC, TJP3 and YES1. Post-translationally, the soluble form derives from the membrane form by proteolytic processing. The membrane-bound form undergoes two successive intramembrane proteolytic cleavages. The first one is processed by ADAM10 producing an N-terminal fragment, which lacks the receptor-binding extracellular domain. This ADAM10-processed FasL (FasL APL) remnant form is still membrane anchored and further processed by SPPL2A that liberates the FasL intracellular domain (FasL ICD). FasL shedding by ADAM10 is a prerequisite for subsequent intramembrane cleavage by SPPL2A in T-cells. Phosphorylated by FGR on tyrosine residues; this is required for ubiquitination and subsequent internalization. In terms of processing, N-glycosylated. Glycosylation enhances apoptotic activity. Post-translationally, monoubiquitinated.

It is found in the cell membrane. It localises to the cytoplasmic vesicle lumen. The protein localises to the lysosome lumen. The protein resides in the secreted. Its subcellular location is the nucleus. Its function is as follows. Cytokine that binds to TNFRSF6/FAS, a receptor that transduces the apoptotic signal into cells. Involved in cytotoxic T-cell-mediated apoptosis, natural killer cell-mediated apoptosis and in T-cell development. Initiates fratricidal/suicidal activation-induced cell death (AICD) in antigen-activated T-cells contributing to the termination of immune responses. TNFRSF6/FAS-mediated apoptosis has also a role in the induction of peripheral tolerance. Binds to TNFRSF6B/DcR3, a decoy receptor that blocks apoptosis. Induces FAS-mediated activation of NF-kappa-B, initiating non-apoptotic signaling pathways. Can induce apoptosis but does not appear to be essential for this process. In terms of biological role, cytoplasmic form induces gene transcription inhibition. The polypeptide is Tumor necrosis factor ligand superfamily member 6 (FASLG) (Macaca fascicularis (Crab-eating macaque)).